An 85-amino-acid chain; its full sequence is Large ribosomal subunit protein bL27 (85 aa).

Residues 1 to 21 are disordered; the sequence is MAHKKAGGSTRNGRDSESKRL.

The protein belongs to the bacterial ribosomal protein bL27 family.

The polypeptide is Large ribosomal subunit protein bL27 (Photorhabdus laumondii subsp. laumondii (strain DSM 15139 / CIP 105565 / TT01) (Photorhabdus luminescens subsp. laumondii)).